We begin with the raw amino-acid sequence, 181 residues long: Acireductone dioxygenase (181 aa).

His-97, His-99, Glu-103, and His-141 together coordinate Fe(2+). Ni(2+) contacts are provided by His-97, His-99, Glu-103, and His-141.

Belongs to the acireductone dioxygenase (ARD) family. In terms of assembly, monomer. Fe(2+) serves as cofactor. Ni(2+) is required as a cofactor.

It carries out the reaction 1,2-dihydroxy-5-(methylsulfanyl)pent-1-en-3-one + O2 = 3-(methylsulfanyl)propanoate + CO + formate + 2 H(+). The enzyme catalyses 1,2-dihydroxy-5-(methylsulfanyl)pent-1-en-3-one + O2 = 4-methylsulfanyl-2-oxobutanoate + formate + 2 H(+). It participates in amino-acid biosynthesis; L-methionine biosynthesis via salvage pathway; L-methionine from S-methyl-5-thio-alpha-D-ribose 1-phosphate: step 5/6. Catalyzes 2 different reactions between oxygen and the acireductone 1,2-dihydroxy-3-keto-5-methylthiopentene (DHK-MTPene) depending upon the metal bound in the active site. Fe-containing acireductone dioxygenase (Fe-ARD) produces formate and 2-keto-4-methylthiobutyrate (KMTB), the alpha-ketoacid precursor of methionine in the methionine recycle pathway. Ni-containing acireductone dioxygenase (Ni-ARD) produces methylthiopropionate, carbon monoxide and formate, and does not lie on the methionine recycle pathway. The sequence is that of Acireductone dioxygenase from Pseudomonas syringae pv. tomato (strain ATCC BAA-871 / DC3000).